Here is a 925-residue protein sequence, read N- to C-terminus: MVMADGPRHLQRGPVRVGFYDIEGTLGKGNFAVVKLGRHRITKTEVAIKIIDKSQLDAVNLEKIYREVQIMKMLDHPHIIKLYQVMETKSMLYLVTEYAKNGEIFDYLANHGRLNESEARRKFWQILSAVDYCHGRKIVHRDLKAENLLLDNNMNIKIADFSFGNFFKSGELLATWRGSPPYAAPEVFEGQQYEGPQLDIWSMGVVLYVLVCGALPFDGPTLPILRQRVLEGRFRIPYFMSEDCEHLIRRMLVLDPSKRLTIAQIKEHKWMLIEVPVQRPVLYPQEQENEPSIGEFNEQVLRLMHSLGIDQQKTIESLQNKSYNHFAAIYFLLVERLKSHRSSFPVEQRLDGRQRRPSAIAEQTVAKAQTVGLPVTMHSPNMRLLRSALLPQASNVEAFSFPASGCQAETAFMEEECVDTPKVNGCLLDPVPPVLVRKGCQSLPSNMMETSIDEGLETEGEAEEDPAHAFEAFQSTRSGQRRHTLSEVTNQLVVMPGAGKIFSMNDSPSLDSVDSEYDMGSVQRDLNFLEDNPSLKDIMLANQPSPRKTSPFISLRPTNPAMQALSSQKREVHNRSPVSFREGRRASDTSLTQGIVAFRQHLQNLARTKGILELNKVQLLYEQIGPEADPNLAPAAPQLQDHASSCPQEEVSQQQESVSTLPASVHPQLSPRQSLETQYLQHRLQKPSLLSKAQNTCQLYCKEPPRSLEQQLQEHRLQQKRLFLQKQSQLQAYFNQMQIAESSYPQPSQQLPLPRQETPPPSQQAPPFSLTQPLSPVLEPSSEQMQYSPFLSQYQEMQLQPLPSTSSPRAAPLPTQLQQQQPPPPPPPPPPRQPGAAPAPLQFSYQTCELPSAAPPAPDYPTPCQYPVDGAQQSDLTGPDCPRSPGLQEAPSSYDPLALSELPGLFDCEMLDAVDPQHNGYVLAN.

The region spanning 20–271 (YDIEGTLGKG…IAQIKEHKWM (252 aa)) is the Protein kinase domain. Thr25 carries the post-translational modification Phosphothreonine. Residues 26–34 (LGKGNFAVV) and Lys49 contribute to the ATP site. An N6-acetyllysine; by EP300 modification is found at Lys53. Catalysis depends on Asp142, which acts as the Proton acceptor. At Thr175 the chain carries Phosphothreonine. Residues 295 to 335 (EFNEQVLRLMHSLGIDQQKTIESLQNKSYNHFAAIYFLLVE) enclose the UBA domain. Ser534 is subject to Phosphoserine. The tract at residues 564 to 586 (ALSSQKREVHNRSPVSFREGRRA) is disordered. Ser587 carries the post-translational modification Phosphoserine. Disordered regions lie at residues 630–674 (PNLA…PRQS), 742–776 (SSYP…PLSP), and 800–895 (QPLP…SSYD). 2 stretches are compositionally biased toward low complexity: residues 648–659 (QEEVSQQQESVS) and 742–756 (SSYP…LPRQ). A compositionally biased stretch (polar residues) spans 765–774 (APPFSLTQPL). Positions 808–820 (PRAAPLPTQLQQQ) are enriched in low complexity. Residues 821-833 (QPPPPPPPPPPRQ) show a composition bias toward pro residues.

Belongs to the protein kinase superfamily. CAMK Ser/Thr protein kinase family. SNF1 subfamily. Interacts with and phosphorylates TORC2/CRTC2. Mg(2+) serves as cofactor. Phosphorylated at Thr-175 by STK11/LKB1 in complex with STE20-related adapter-alpha (STRADA) pseudo kinase and CAB39. Phosphorylated at Thr-484 in response to insulin in adipocytes. In terms of processing, acetylation at Lys-53 inhibits kinase activity. Deacetylated by HDAC6.

The protein localises to the cytoplasm. Its subcellular location is the endoplasmic reticulum membrane. It carries out the reaction L-seryl-[protein] + ATP = O-phospho-L-seryl-[protein] + ADP + H(+). The catalysed reaction is L-threonyl-[protein] + ATP = O-phospho-L-threonyl-[protein] + ADP + H(+). With respect to regulation, activated by phosphorylation on Thr-175. Serine/threonine-protein kinase that plays a role in many biological processes such as fatty acid oxidation, autophagy, immune response or glucose metabolism. Phosphorylates 'Ser-794' of IRS1 in insulin-stimulated adipocytes, potentially modulating the efficiency of insulin signal transduction. Inhibits CREB activity by phosphorylating and repressing TORCs, the CREB-specific coactivators. Phosphorylates EP300 and thus inhibits its histone acetyltransferase activity. In turn, regulates the DNA-binding ability of several transcription factors such as PPARA or MLXIPL. Also plays a role in thymic T-cell development. The sequence is that of Serine/threonine-protein kinase SIK2 (SIK2) from Pongo abelii (Sumatran orangutan).